The primary structure comprises 536 residues: Beta-hexosaminidase subunit beta (536 aa).

An N-terminal signal peptide occupies residues 1–31 (MPQSPRSAPGLLLLQALVSLVSLALVAPARL). N63 is a glycosylation site (N-linked (GlcNAc...) asparagine). An intrachain disulfide couples C70 to C116. Residues N169 and N306 are each glycosylated (N-linked (GlcNAc...) asparagine). Intrachain disulfides connect C288/C339 and C513/C530. The active-site Proton donor is the E334.

It belongs to the glycosyl hydrolase 20 family. As to quaternary structure, there are 3 forms of beta-hexosaminidase: hexosaminidase A is a heterodimer composed of one subunit alpha and one subunit beta (chain A and B); hexosaminidase B is a homodimer of two beta subunits (two chains A and B); hexosaminidase S is a homodimer of two alpha subunits. The composition of the dimer (isozyme A versus isozyme S) has a significant effect on the substrate specificity of the alpha subunit active site.

It localises to the lysosome. It is found in the cytoplasmic vesicle. The protein resides in the secretory vesicle. Its subcellular location is the cortical granule. The catalysed reaction is Hydrolysis of terminal non-reducing N-acetyl-D-hexosamine residues in N-acetyl-beta-D-hexosaminides.. The enzyme catalyses N-acetyl-beta-D-galactosaminyl-(1-&gt;4)-beta-D-3-sulfogalactosyl-(1-&gt;4)-beta-D-glucosyl-(1&lt;-&gt;1')-ceramide + H2O = a beta-D-3-sulfogalactosyl-(1-&gt;4)-beta-D-glucosyl-(1&lt;-&gt;1')-ceramide + N-acetyl-beta-D-galactosamine. It catalyses the reaction a ganglioside GM2 (d18:1(4E)) + H2O = a ganglioside GM3 (d18:1(4E)) + N-acetyl-beta-D-galactosamine. It carries out the reaction a ganglioside GM2 + H2O = a ganglioside GM3 + N-acetyl-beta-D-galactosamine. The catalysed reaction is beta-D-GalNAc-(1-&gt;4)-alpha-L-IdoA-(1-&gt;3)-beta-D-GalNAc-4-sulfate-(1-&gt;4)-alpha-L-IdoA-(1-&gt;3)-D-GalNAc-4-sulfate + H2O = alpha-L-IdoA-(1-&gt;3)-beta-D-GalNAc-4-sulfate-(1-&gt;4)-alpha-L-IdoA-(1-&gt;3)-D-GalNAc-4-sulfate + N-acetyl-D-galactosamine. The enzyme catalyses N-acetyl-beta-D-6-sulfogalactosaminyl-(1-&gt;4)-alpha-L-iduronyl-(1-&gt;3)-N-acetyl-D-6-sulfogalactosamine + H2O = alpha-L-iduronyl-(1-&gt;3)-N-acetyl-D-6-sulfogalactosamine + N-acetyl-D-6-sulfogalactosamine. Its activity is regulated as follows. Addition of GM2A stimulates the hydrolysis of sulfated glycosphingolipid SM2 and the ganglioside GM2. In terms of biological role, hydrolyzes the non-reducing end N-acetyl-D-hexosamine and/or sulfated N-acetyl-D-hexosamine of glycoconjugates, such as the oligosaccharide moieties from proteins and neutral glycolipids, or from certain mucopolysaccharides. The isozyme B does not hydrolyze each of these substrates, however hydrolyzes efficiently neutral oligosaccharide. Only the isozyme A is responsible for the degradation of GM2 gangliosides in the presence of GM2A. During fertilization is responsible, at least in part, for the zona block to polyspermy. Present in the cortical granules of non-activated oocytes, is exocytosed during the cortical reaction in response to oocyte activation and inactivates the sperm galactosyltransferase-binding site, accounting for the block in sperm binding to the zona pellucida. This Mus musculus (Mouse) protein is Beta-hexosaminidase subunit beta.